The following is a 237-amino-acid chain: 1-(5-phosphoribosyl)-5-[(5-phosphoribosylamino)methylideneamino] imidazole-4-carboxamide isomerase (237 aa).

D8 (proton acceptor) is an active-site residue. Catalysis depends on D129, which acts as the Proton donor.

It belongs to the HisA/HisF family.

The protein localises to the cytoplasm. The catalysed reaction is 1-(5-phospho-beta-D-ribosyl)-5-[(5-phospho-beta-D-ribosylamino)methylideneamino]imidazole-4-carboxamide = 5-[(5-phospho-1-deoxy-D-ribulos-1-ylimino)methylamino]-1-(5-phospho-beta-D-ribosyl)imidazole-4-carboxamide. The protein operates within amino-acid biosynthesis; L-histidine biosynthesis; L-histidine from 5-phospho-alpha-D-ribose 1-diphosphate: step 4/9. In Acetivibrio thermocellus (strain ATCC 27405 / DSM 1237 / JCM 9322 / NBRC 103400 / NCIMB 10682 / NRRL B-4536 / VPI 7372) (Clostridium thermocellum), this protein is 1-(5-phosphoribosyl)-5-[(5-phosphoribosylamino)methylideneamino] imidazole-4-carboxamide isomerase.